The sequence spans 185 residues: ATP synthase subunit b, chloroplastic (185 aa).

The helical transmembrane segment at 31–49 (LINSGVVLGLPVYSGKGVL) threads the bilayer.

The protein belongs to the ATPase B chain family. In terms of assembly, F-type ATPases have 2 components, F(1) - the catalytic core - and F(0) - the membrane proton channel. F(1) has five subunits: alpha(3), beta(3), gamma(1), delta(1), epsilon(1). F(0) has four main subunits: a(1), b(1), b'(1) and c(10-14). The alpha and beta chains form an alternating ring which encloses part of the gamma chain. F(1) is attached to F(0) by a central stalk formed by the gamma and epsilon chains, while a peripheral stalk is formed by the delta, b and b' chains.

It localises to the plastid. The protein resides in the chloroplast thylakoid membrane. In terms of biological role, f(1)F(0) ATP synthase produces ATP from ADP in the presence of a proton or sodium gradient. F-type ATPases consist of two structural domains, F(1) containing the extramembraneous catalytic core and F(0) containing the membrane proton channel, linked together by a central stalk and a peripheral stalk. During catalysis, ATP synthesis in the catalytic domain of F(1) is coupled via a rotary mechanism of the central stalk subunits to proton translocation. Component of the F(0) channel, it forms part of the peripheral stalk, linking F(1) to F(0). In Huperzia lucidula (Shining clubmoss), this protein is ATP synthase subunit b, chloroplastic.